The chain runs to 485 residues: MTITPQQLIALLPLLIVGLTVVVVMLSIAWRRDHFINTTLTVIGLNLALLSLYFVGQQEAMDVTPLVHVDRYAMLYIGLVLVASLATATFAYSWLENYPDNKEEFYLLVLIATVGGILLACANHLASLFIGIELLTLPLFGLIGYAYRQKRSLEAAIKYMLLSAAASSFMLFGIALLYAESGDLSFAALGHRLSDSYIYQPLILSGLGMLVVGLGFKLSLVPFHLWTPDVYQGAPAPVSTFLATASKIAIFAVVIRLFVEAPMADSEALRTVLTVIAIASMLFGNLMALTQTNIKRLLGYSSIAHLGYLLVALVAVQNHQLSEETVGIYLAGYLFSSIGAFGVVSLMSSPYKGPDADSLYSYRGLFWHKPILSAVMTVMMLSLAGIPMTFGFIGKFYVIVLGVKAELWWLTGAVVVGSAIGLYYYLRVMVSLYLPAPKALNRDTPRNWASTAGGMVVLISALLVLALGIWPQPLIDVIQQAKIIL.

14 helical membrane-spanning segments follow: residues 8 to 28, 35 to 55, 75 to 95, 104 to 124, 125 to 145, 159 to 179, 203 to 223, 235 to 255, 271 to 291, 297 to 317, 326 to 346, 383 to 403, 406 to 426, and 455 to 475; these read LIAL…MLSI, FINT…LYFV, LYIG…YSWL, EFYL…CANH, LASL…LIGY, YMLL…LLYA, ILSG…LVPF, PAPV…AVVI, TVLT…ALTQ, LLGY…VAVQ, VGIY…VVSL, LAGI…VLGV, ELWW…YYYL, and MVVL…QPLI.

It belongs to the complex I subunit 2 family. As to quaternary structure, NDH-1 is composed of 13 different subunits. Subunits NuoA, H, J, K, L, M, N constitute the membrane sector of the complex.

It localises to the cell inner membrane. It catalyses the reaction a quinone + NADH + 5 H(+)(in) = a quinol + NAD(+) + 4 H(+)(out). Functionally, NDH-1 shuttles electrons from NADH, via FMN and iron-sulfur (Fe-S) centers, to quinones in the respiratory chain. The immediate electron acceptor for the enzyme in this species is believed to be ubiquinone. Couples the redox reaction to proton translocation (for every two electrons transferred, four hydrogen ions are translocated across the cytoplasmic membrane), and thus conserves the redox energy in a proton gradient. The protein is NADH-quinone oxidoreductase subunit N of Photorhabdus laumondii subsp. laumondii (strain DSM 15139 / CIP 105565 / TT01) (Photorhabdus luminescens subsp. laumondii).